The following is a 383-amino-acid chain: Succinyl-diaminopimelate desuccinylase (383 aa).

Residue His-68 participates in Zn(2+) binding. Asp-70 is a catalytic residue. Asp-100 serves as a coordination point for Zn(2+). Residue Glu-130 is the Proton acceptor of the active site. Zn(2+)-binding residues include Glu-131, Glu-159, and His-352.

Belongs to the peptidase M20A family. DapE subfamily. Homodimer. Requires Zn(2+) as cofactor. It depends on Co(2+) as a cofactor.

The catalysed reaction is N-succinyl-(2S,6S)-2,6-diaminopimelate + H2O = (2S,6S)-2,6-diaminopimelate + succinate. Its pathway is amino-acid biosynthesis; L-lysine biosynthesis via DAP pathway; LL-2,6-diaminopimelate from (S)-tetrahydrodipicolinate (succinylase route): step 3/3. Its function is as follows. Catalyzes the hydrolysis of N-succinyl-L,L-diaminopimelic acid (SDAP), forming succinate and LL-2,6-diaminopimelate (DAP), an intermediate involved in the bacterial biosynthesis of lysine and meso-diaminopimelic acid, an essential component of bacterial cell walls. The sequence is that of Succinyl-diaminopimelate desuccinylase from Granulibacter bethesdensis (strain ATCC BAA-1260 / CGDNIH1).